Here is a 590-residue protein sequence, read N- to C-terminus: DNA mismatch repair protein MutL (590 aa).

It belongs to the DNA mismatch repair MutL/HexB family.

This protein is involved in the repair of mismatches in DNA. It is required for dam-dependent methyl-directed DNA mismatch repair. May act as a 'molecular matchmaker', a protein that promotes the formation of a stable complex between two or more DNA-binding proteins in an ATP-dependent manner without itself being part of a final effector complex. The chain is DNA mismatch repair protein MutL from Caldanaerobacter subterraneus subsp. tengcongensis (strain DSM 15242 / JCM 11007 / NBRC 100824 / MB4) (Thermoanaerobacter tengcongensis).